Here is a 766-residue protein sequence, read N- to C-terminus: LPS-assembly protein LptD (766 aa).

Residues 1–18 form the signal peptide; the sequence is MNIRYLLLLSLMPHLVWA.

It belongs to the LptD family. In terms of assembly, component of the lipopolysaccharide transport and assembly complex. Interacts with LptE and LptA.

Its subcellular location is the cell outer membrane. Its function is as follows. Together with LptE, is involved in the assembly of lipopolysaccharide (LPS) at the surface of the outer membrane. The chain is LPS-assembly protein LptD from Shewanella denitrificans (strain OS217 / ATCC BAA-1090 / DSM 15013).